We begin with the raw amino-acid sequence, 1263 residues long: TBC1 domain family member 9B (1263 aa).

GRAM domains lie at 142–209 and 288–356; these read LKMR…EKNA and ECYR…EKAD. A Phosphothreonine modification is found at threonine 397. The interval 397-449 is disordered; it reads TPSKQTGSSIGGTKASVSDPAPESLPTPQEASEPPASPSSPLSSPPSFSTQEI. Residues serine 412, serine 433, serine 436, and serine 464 each carry the phosphoserine modification. Positions 422 to 447 are enriched in low complexity; sequence PTPQEASEPPASPSSPLSSPPSFSTQ. Residues 509 to 696 form the Rab-GAP TBC domain; that stretch reads GIPESLRGEL…VIVDCFFYEG (188 aa). A helical transmembrane segment spans residues 669–689; that stretch reads LSWFLTLFLSVMPFESAVVIV. Positions 880–915 constitute an EF-hand domain; the sequence is HTPVLAGRMFRLLDQNKDSLINFKEFVTGMSGMYHG. 3 disordered regions span residues 977 to 1002, 1075 to 1126, and 1139 to 1159; these read EQQE…PDYR, TTKK…SGDM, and VEGG…DDET. Residues 987 to 1002 are compositionally biased toward basic and acidic residues; it reads TPERREEKGTSPPDYR. Phosphoserine is present on serine 1254.

The protein localises to the membrane. Functionally, may act as a GTPase-activating protein for Rab family protein(s). The polypeptide is TBC1 domain family member 9B (Tbc1d9b) (Mus musculus (Mouse)).